The sequence spans 229 residues: 7-cyano-7-deazaguanine synthase (229 aa).

8–18 (FSGGQDSTTCL) is an ATP binding site. Zn(2+)-binding residues include Cys187, Cys196, Cys199, and Cys202.

Belongs to the QueC family. Zn(2+) serves as cofactor.

It carries out the reaction 7-carboxy-7-deazaguanine + NH4(+) + ATP = 7-cyano-7-deazaguanine + ADP + phosphate + H2O + H(+). Its pathway is purine metabolism; 7-cyano-7-deazaguanine biosynthesis. Functionally, catalyzes the ATP-dependent conversion of 7-carboxy-7-deazaguanine (CDG) to 7-cyano-7-deazaguanine (preQ(0)). This chain is 7-cyano-7-deazaguanine synthase, found in Shewanella halifaxensis (strain HAW-EB4).